The primary structure comprises 728 residues: Catalase-peroxidase (728 aa).

Positions tryptophan 91–tyrosine 218 form a cross-link, tryptophyl-tyrosyl-methioninium (Trp-Tyr) (with M-244). Residue histidine 92 is the Proton acceptor of the active site. Positions tyrosine 218 to methionine 244 form a cross-link, tryptophyl-tyrosyl-methioninium (Tyr-Met) (with W-91). Histidine 259 contributes to the heme b binding site.

The protein belongs to the peroxidase family. Peroxidase/catalase subfamily. In terms of assembly, homodimer or homotetramer. Requires heme b as cofactor. In terms of processing, formation of the three residue Trp-Tyr-Met cross-link is important for the catalase, but not the peroxidase activity of the enzyme.

It catalyses the reaction H2O2 + AH2 = A + 2 H2O. The catalysed reaction is 2 H2O2 = O2 + 2 H2O. In terms of biological role, bifunctional enzyme with both catalase and broad-spectrum peroxidase activity. The protein is Catalase-peroxidase of Burkholderia pseudomallei (strain 1710b).